Consider the following 150-residue polypeptide: Large ribosomal subunit protein uL15 (150 aa).

A compositionally biased stretch (polar residues) spans 1–15 (MNLSNLQPAEGSTHN). The tract at residues 1 to 53 (MNLSNLQPAEGSTHNQNKRVGRGEGSGKGGTAARGHKGAKSRSGYSKKIGFEG) is disordered. Over residues 23–32 (GEGSGKGGTA) the composition is skewed to gly residues.

It belongs to the universal ribosomal protein uL15 family. Part of the 50S ribosomal subunit.

Binds to the 23S rRNA. The polypeptide is Large ribosomal subunit protein uL15 (Flavobacterium johnsoniae (strain ATCC 17061 / DSM 2064 / JCM 8514 / BCRC 14874 / CCUG 350202 / NBRC 14942 / NCIMB 11054 / UW101) (Cytophaga johnsonae)).